The sequence spans 339 residues: Glucokinase (339 aa).

16 to 21 (GDIGGT) provides a ligand contact to ATP.

Belongs to the bacterial glucokinase family.

The protein resides in the cytoplasm. The enzyme catalyses D-glucose + ATP = D-glucose 6-phosphate + ADP + H(+). The chain is Glucokinase from Sinorhizobium fredii (strain NBRC 101917 / NGR234).